We begin with the raw amino-acid sequence, 71 residues long: UPF0346 protein Sez_1447 (71 aa).

This sequence belongs to the UPF0346 family.

This chain is UPF0346 protein Sez_1447, found in Streptococcus equi subsp. zooepidemicus (strain MGCS10565).